Reading from the N-terminus, the 106-residue chain is Pyruvate decarboxylase 2 (106 aa).

2 residues coordinate Mg(2+): Asn-10 and Gly-12.

This sequence belongs to the TPP enzyme family. As to quaternary structure, homotetramer. A metal cation serves as cofactor. Requires thiamine diphosphate as cofactor.

It catalyses the reaction a 2-oxocarboxylate + H(+) = an aldehyde + CO2. This Zea mays (Maize) protein is Pyruvate decarboxylase 2 (PDC2).